A 140-amino-acid polypeptide reads, in one-letter code: General stress protein 26 (140 aa).

The protein is General stress protein 26 (ydaG) of Bacillus subtilis (strain 168).